The primary structure comprises 693 residues: Golgin subfamily A member 6B (693 aa).

Pro residues predominate over residues 1 to 11 (MWPQPYLPPHP). Disordered stretches follow at residues 1 to 72 (MWPQ…SQYQ), 497 to 551 (LPGE…VERR), 629 to 650 (NPAD…AGEQ), and 660 to 679 (NNVE…DNPT). The stretch at 77–611 (ALESSSVTIS…KLLELQELVL (535 aa)) forms a coiled coil. Over residues 537–551 (LPKEKADGTEQVERR) the composition is skewed to basic and acidic residues.

The protein belongs to the GOLGA6 family.

The chain is Golgin subfamily A member 6B (GOLGA6B) from Homo sapiens (Human).